The sequence spans 95 residues: Co-chaperonin GroES (95 aa).

The protein belongs to the GroES chaperonin family. As to quaternary structure, heptamer of 7 subunits arranged in a ring. Interacts with the chaperonin GroEL.

It is found in the cytoplasm. Functionally, together with the chaperonin GroEL, plays an essential role in assisting protein folding. The GroEL-GroES system forms a nano-cage that allows encapsulation of the non-native substrate proteins and provides a physical environment optimized to promote and accelerate protein folding. GroES binds to the apical surface of the GroEL ring, thereby capping the opening of the GroEL channel. The polypeptide is Co-chaperonin GroES (Oleidesulfovibrio alaskensis (strain ATCC BAA-1058 / DSM 17464 / G20) (Desulfovibrio alaskensis)).